We begin with the raw amino-acid sequence, 102 residues long: Small integral membrane protein 29 (102 aa).

Asn3 carries N-linked (GlcNAc...) asparagine glycosylation. Residues 21-41 traverse the membrane as a helical segment; it reads VLGPFFLITLVGVVVAVVMYV.

It is found in the membrane. The polypeptide is Small integral membrane protein 29 (Mus musculus (Mouse)).